The chain runs to 454 residues: tRNA modification GTPase MnmE (454 aa).

(6S)-5-formyl-5,6,7,8-tetrahydrofolate contacts are provided by Arg23, Glu80, and Lys120. The TrmE-type G domain maps to 216 to 377; that stretch reads GMKVVIAGRP…LRNNLKQSMG (162 aa). K(+) is bound at residue Asn226. GTP-binding positions include 226–231, 245–251, 270–273, 335–338, and 358–360; these read NAGKSS, TDIAGTT, DTAG, NKAD, and SAR. Mg(2+) is bound at residue Ser230. Positions 245, 247, and 250 each coordinate K(+). Thr251 is a binding site for Mg(2+). Lys454 is a binding site for (6S)-5-formyl-5,6,7,8-tetrahydrofolate.

It belongs to the TRAFAC class TrmE-Era-EngA-EngB-Septin-like GTPase superfamily. TrmE GTPase family. In terms of assembly, homodimer. Heterotetramer of two MnmE and two MnmG subunits. K(+) is required as a cofactor.

Its subcellular location is the cytoplasm. In terms of biological role, exhibits a very high intrinsic GTPase hydrolysis rate. Involved in the addition of a carboxymethylaminomethyl (cmnm) group at the wobble position (U34) of certain tRNAs, forming tRNA-cmnm(5)s(2)U34. The polypeptide is tRNA modification GTPase MnmE (Salmonella paratyphi A (strain AKU_12601)).